Consider the following 198-residue polypeptide: Protein GrpE (198 aa).

Positions 1–27 (MEERNEQVVEETKEAQTEEATIEKNSE) are enriched in basic and acidic residues. The segment at 1–39 (MEERNEQVVEETKEAQTEEATIEKNSEESVTEEATEETV) is disordered. The segment covering 29-39 (SVTEEATEETV) has biased composition (acidic residues).

Belongs to the GrpE family. As to quaternary structure, homodimer.

It localises to the cytoplasm. Functionally, participates actively in the response to hyperosmotic and heat shock by preventing the aggregation of stress-denatured proteins, in association with DnaK and GrpE. It is the nucleotide exchange factor for DnaK and may function as a thermosensor. Unfolded proteins bind initially to DnaJ; upon interaction with the DnaJ-bound protein, DnaK hydrolyzes its bound ATP, resulting in the formation of a stable complex. GrpE releases ADP from DnaK; ATP binding to DnaK triggers the release of the substrate protein, thus completing the reaction cycle. Several rounds of ATP-dependent interactions between DnaJ, DnaK and GrpE are required for fully efficient folding. This chain is Protein GrpE, found in Bacillus cytotoxicus (strain DSM 22905 / CIP 110041 / 391-98 / NVH 391-98).